A 192-amino-acid chain; its full sequence is uncharacterized protein (192 aa).

This is an uncharacterized protein from Methanocaldococcus jannaschii (strain ATCC 43067 / DSM 2661 / JAL-1 / JCM 10045 / NBRC 100440) (Methanococcus jannaschii).